The chain runs to 356 residues: AT-hook motif nuclear-localized protein 1 (356 aa).

The segment at 1–127 (MVLNMESTGE…PSHLPPPSSH (127 aa)) is disordered. Pro residues predominate over residues 49 to 66 (VTPPPPQPSSHHTAPPPL). The span at 88–97 (MKKKRGRPRK) shows a compositional bias: basic residues. The short motif at 89-97 (KKKRGRPRK) is the Bipartite nuclear localization signal element. A DNA-binding region (a.T hook) is located at residues 89-101 (KKKRGRPRKYGPD). Over residues 106–118 (ALSPKPISSAPAP) the composition is skewed to low complexity. Residues 167–309 (GGNFTPHIIT…KHDFMLSSPT (143 aa)) enclose the PPC domain. The tract at residues 270-287 (GLLVAASPVQVVVGSFLA) is required for nuclear localization. A Nuclear localization signal motif is present at residues 295-302 (KPKKNKHD).

It is found in the nucleus. The protein resides in the nucleoplasm. It localises to the chromosome. Transcription factor that specifically binds AT-rich DNA sequences related to the nuclear matrix attachment regions (MARs). May play a function in the positioning of chromatin fibers within the nucleus. In Arabidopsis thaliana (Mouse-ear cress), this protein is AT-hook motif nuclear-localized protein 1.